Reading from the N-terminus, the 467-residue chain is Syntaxin-5 (467 aa).

2 disordered regions span residues 1–53 (MQTR…QSLV) and 58–77 (GHEAAIHIGDNYQSGDSIST). Over 1-445 (MQTRRRLHQT…KYFQSVSKNR (445 aa)) the chain is Cytoplasmic. A compositionally biased stretch (low complexity) spans 10–22 (TDQQDYSSSSTYT). Over residues 29-45 (GGAGAGSVGTGTAGGSV) the composition is skewed to gly residues. Residues 68–77 (NYQSGDSIST) are compositionally biased toward polar residues. Residues 245–269 (IKGDLNALNQQIARLQDISKDQRRH) adopt a coiled-coil conformation. Residues 310 to 335 (QQKTRRDQFSQGPGPLAAHTVSPSTA) form a disordered region. The t-SNARE coiled-coil homology domain occupies 375-437 (DNYVQQRAET…EAAHGEILKY (63 aa)). Residues 446 to 466 (WLMIKIFGVLIFFFLFFVVFM) form a helical; Anchor for type IV membrane protein membrane-spanning segment. Residue S467 is a topological domain, vesicular.

This sequence belongs to the syntaxin family. Homodimer.

It is found in the golgi apparatus. It localises to the cis-Golgi network membrane. Its function is as follows. Mediates endoplasmic reticulum to Golgi transport. This chain is Syntaxin-5, found in Drosophila melanogaster (Fruit fly).